A 72-amino-acid chain; its full sequence is Inner membrane protein YmgF (72 aa).

Over 1–9 the chain is Cytoplasmic; it reads MNNSNNLDY. The helical transmembrane segment at 10 to 30 threads the bilayer; the sequence is FTLYIIFSIAFMLITLLVILI. Over 31-34 the chain is Periplasmic; sequence AKPS. Residues 35 to 55 traverse the membrane as a helical segment; the sequence is TGLGEVLVTINLLNALVWLAI. Residues 56–72 are Cytoplasmic-facing; sequence NLVNRLRERLVNHRDQQ.

Interacts with FtsL, FtsQ, FtsI, FtsN, and probably many other cell division proteins.

The protein localises to the cell inner membrane. Functionally, could be involved in cell division. May participate in the stabilization of the cell divisome under specific conditions. This chain is Inner membrane protein YmgF (ymgF), found in Escherichia coli (strain K12).